The primary structure comprises 252 residues: Imidazole glycerol phosphate synthase subunit HisF (252 aa).

Active-site residues include aspartate 11 and aspartate 130.

This sequence belongs to the HisA/HisF family. As to quaternary structure, heterodimer of HisH and HisF.

It localises to the cytoplasm. The catalysed reaction is 5-[(5-phospho-1-deoxy-D-ribulos-1-ylimino)methylamino]-1-(5-phospho-beta-D-ribosyl)imidazole-4-carboxamide + L-glutamine = D-erythro-1-(imidazol-4-yl)glycerol 3-phosphate + 5-amino-1-(5-phospho-beta-D-ribosyl)imidazole-4-carboxamide + L-glutamate + H(+). It functions in the pathway amino-acid biosynthesis; L-histidine biosynthesis; L-histidine from 5-phospho-alpha-D-ribose 1-diphosphate: step 5/9. Functionally, IGPS catalyzes the conversion of PRFAR and glutamine to IGP, AICAR and glutamate. The HisF subunit catalyzes the cyclization activity that produces IGP and AICAR from PRFAR using the ammonia provided by the HisH subunit. This is Imidazole glycerol phosphate synthase subunit HisF from Bacillus mycoides (strain KBAB4) (Bacillus weihenstephanensis).